The primary structure comprises 235 residues: Aspartate/glutamate leucyltransferase (235 aa).

Belongs to the R-transferase family. Bpt subfamily.

Its subcellular location is the cytoplasm. It carries out the reaction N-terminal L-glutamyl-[protein] + L-leucyl-tRNA(Leu) = N-terminal L-leucyl-L-glutamyl-[protein] + tRNA(Leu) + H(+). The enzyme catalyses N-terminal L-aspartyl-[protein] + L-leucyl-tRNA(Leu) = N-terminal L-leucyl-L-aspartyl-[protein] + tRNA(Leu) + H(+). Functions in the N-end rule pathway of protein degradation where it conjugates Leu from its aminoacyl-tRNA to the N-termini of proteins containing an N-terminal aspartate or glutamate. In Pseudomonas fluorescens (strain ATCC BAA-477 / NRRL B-23932 / Pf-5), this protein is Aspartate/glutamate leucyltransferase.